The primary structure comprises 354 residues: Myosin-binding protein H-like (354 aa).

Positions 1-47 (MEAATAPEVAAGSKLKVKEASPADAEPPQASPGQGAGSPTPQLLPPI) are disordered. Ser38 carries the phosphoserine modification. An Ig-like C2-type 1 domain is found at 45-139 (PPIEEHPKIW…GGLEATATID (95 aa)). Residues 148–238 (PPQSIKLVDV…ETAPITTDLA (91 aa)) form the Fibronectin type-III domain. An Ig-like C2-type 2 domain is found at 261-345 (PKFTQPLADC…VNPLGEASVD (85 aa)). Residues Cys282 and Cys333 are joined by a disulfide bond. The residue at position 321 (Arg321) is an Omega-N-methylarginine.

Belongs to the immunoglobulin superfamily. MyBP family. In terms of tissue distribution, expressed in heart, with higher expression in the atria. Expressed in left atrium and ventricle, arteria mammaria interna and skeletal muscle. As to expression, expressed specifically en the left atrium.

It localises to the cytoplasm. The protein resides in the myofibril. The protein localises to the sarcomere. Its function is as follows. Myosin-binding protein which plays a role in cardiac function. Seems to regulate conduction in the atria and ventricular conduction systems. In Homo sapiens (Human), this protein is Myosin-binding protein H-like.